Consider the following 501-residue polypeptide: Orsellinic acid/F9775 biosynthesis cluster protein D (501 aa).

The segment at glutamate 137–valine 189 is disordered. Residues threonine 142 to aspartate 169 show a composition bias toward acidic residues. A compositionally biased stretch (polar residues) spans glycine 172–glycine 183.

Functionally, part of the gene cluster that mediates the biosynthesis of orsellinic acid, as well as of the cathepsin K inhibitors F9775 A and F9775 B. The non-reducing polyketide synthase orsA produces orsellinic acid by condensing acetyl-CoA with 3 malonyl-CoA units. Further modifications by the decarboxylase orsB and the tyrosinase-like protein orsC lead to the production of F9775 A and F9775 B. The functions of orsD and orsE remain unclear since only orsB and orsC are required to convert orsellinic acid into F9775 A and F9775 B. The protein is Orsellinic acid/F9775 biosynthesis cluster protein D of Emericella nidulans (strain FGSC A4 / ATCC 38163 / CBS 112.46 / NRRL 194 / M139) (Aspergillus nidulans).